A 429-amino-acid polypeptide reads, in one-letter code: Histidine--tRNA ligase (429 aa).

Belongs to the class-II aminoacyl-tRNA synthetase family. Homodimer.

Its subcellular location is the cytoplasm. It catalyses the reaction tRNA(His) + L-histidine + ATP = L-histidyl-tRNA(His) + AMP + diphosphate + H(+). The sequence is that of Histidine--tRNA ligase from Pseudomonas fluorescens (strain SBW25).